The primary structure comprises 485 residues: Glutamyl-tRNA(Gln) amidotransferase subunit A (485 aa).

Catalysis depends on charge relay system residues Lys-74 and Ser-149. Catalysis depends on Ser-173, which acts as the Acyl-ester intermediate.

This sequence belongs to the amidase family. GatA subfamily. In terms of assembly, heterotrimer of A, B and C subunits.

It catalyses the reaction L-glutamyl-tRNA(Gln) + L-glutamine + ATP + H2O = L-glutaminyl-tRNA(Gln) + L-glutamate + ADP + phosphate + H(+). Allows the formation of correctly charged Gln-tRNA(Gln) through the transamidation of misacylated Glu-tRNA(Gln) in organisms which lack glutaminyl-tRNA synthetase. The reaction takes place in the presence of glutamine and ATP through an activated gamma-phospho-Glu-tRNA(Gln). The polypeptide is Glutamyl-tRNA(Gln) amidotransferase subunit A (Herminiimonas arsenicoxydans).